Here is an 860-residue protein sequence, read N- to C-terminus: Transforming growth factor-beta receptor-associated protein 1 (860 aa).

A CNH domain is found at H24 to V297. One copy of the CHCR repeat lies at R564 to D732.

The protein belongs to the TRAP1 family. Interacts with TGFBR2 and ACVR2B; in the absence of ligand stimulation. Interacts with TGFBR1, ACVRL1, BMPR1A and ACVR1B; in the absence of ligand stimulation and to a less extent. Interacts with SMAD4; the interaction seems to be mutually exclusive with the interaction of SMAD4 and phosphorylated SMAD2. May interact with ALOX5. Interacts with RAB5C. Interacts with VPS8, VPS11 and VPS16. Component of the putative class C core vacuole/endosome tethering (CORVET) complex; the core of which composed of the class C Vps proteins VPS11, VPS16, VPS18 and VPS33A, is associated with VPS8 and TGFBRAP1.

It is found in the cytoplasm. The protein resides in the early endosome. Functionally, plays a role in the TGF-beta/activin signaling pathway. It associates with inactive heteromeric TGF-beta and activin receptor complexes, mainly through the type II receptor, and is released upon activation of signaling. May recruit SMAD4 to the vicinity of the receptor complex and facilitate its interaction with receptor-regulated Smads, such as SMAD2. In terms of biological role, plays a role in vesicle-mediated protein trafficking of the endocytic membrane transport pathway. Believed to act as a component of the putative CORVET endosomal tethering complexes which is proposed to be involved in the Rab5-to-Rab7 endosome conversion probably implicating MON1A/B, and via binding SNAREs and SNARE complexes to mediate tethering and docking events during SNARE-mediated membrane fusion. The CORVET complex is proposed to function as a Rab5 effector to mediate early endosome fusion probably in specific endosome subpopulations. Functions predominantly in APPL1-containing endosomes and in degradative but not recycling trafficking of endocytosed cargo. In Mus musculus (Mouse), this protein is Transforming growth factor-beta receptor-associated protein 1 (Tgfbrap1).